The chain runs to 669 residues: Hypoxia-inducible factor 3-alpha (669 aa).

Positions 1-27 (MALGLQRARSTTELRKEKSRDAARSRR) are disordered. The segment covering 10–27 (STTELRKEKSRDAARSRR) has biased composition (basic and acidic residues). In terms of domain architecture, bHLH spans 14-67 (LRKEKSRDAARSRRSQETEVLYQLAHTLPFARGVSAHLDKASIMRLTISYLRMH). A nuclear localization signal region spans residues 77 to 100 (QVGAGGEPLDACYLKALEGFVMVL). 2 consecutive PAS domains span residues 82–154 (GEPL…LSRR) and 227–297 (PHPG…LSKG). The interval 230 to 274 (GSLEPPLGRGAFLSRHSLDMKFTYCDDRIAEVAGYSPDDLIGCSA) is nuclear export signal. Residues 354 to 389 (EQTEQHSRRPIQRGAPSQKDTPNPGDSLDTPGPRIL) form a disordered region. An LRRLL motif is present at residues 414–418 (LRRLL). Residues 430-444 (TPSTPLATRHPQSPL) are compositionally biased toward polar residues. The disordered stretch occupies residues 430 to 451 (TPSTPLATRHPQSPLSADLPDE). Residues 452–581 (LPVGTENVHR…TLAQSSEDED (130 aa)) are ODD. An NTAD region spans residues 454–506 (VGTENVHRLFTSGKDTEAVETDLDIAQDADALDLEMLAPYISMDDDFQLNASE). Lys-467 is covalently cross-linked (Glycyl lysine isopeptide (Lys-Gly) (interchain with G-Cter in ubiquitin)). The LAPYISMD signature appears at 490–497 (LAPYISMD). Pro-492 is subject to 4-hydroxyproline. 2 disordered regions span residues 523–600 (RARS…SPEH) and 619–669 (APGS…AQAD). Composition is skewed to low complexity over residues 530–541 (LSPPALEPSLLP) and 550–564 (SCSS…ASSP). A Glycyl lysine isopeptide (Lys-Gly) (interchain with G-Cter in ubiquitin) cross-link involves residue Lys-570. Over residues 629–646 (PLLNLNEPLGLGPSLLSP) the composition is skewed to low complexity.

Isoform 2 interacts (via ODD domain) with VHL (via beta domain). Isoform 4 interacts with HIF1A; the interaction inhibits the binding of HIF1A to hypoxia-responsive element (HRE) and HIF1A/ARNT-dependent transcriptional activation. Isoform 4 interacts with ARNT; the interaction occurs in a HIF1A- and DNA-binding-independent manner and does not induce HIF1A/ARNT-dependent transcriptional activation. Isoform 4 interacts with EPAS1. Interacts with BAD, BCL2L2 and MCL1. In terms of processing, in normoxia, hydroxylated on Pro-492 in the oxygen-dependent degradation domain (ODD) by prolyl hydroxylase(s) (PHD). The hydroxylated proline promotes interaction with VHL, initiating rapid ubiquitination and subsequent proteasomal degradation. Post-translationally, ubiquitinated; ubiquitination occurs in a VHL- and oxygen-dependent pathway and subsequently targeted for proteasomal degradation. As to expression, expressed in vascular cells (at protein level). Expressed in kidney. Expressed in lung epithelial cells. Expressed in endothelial cells (venous and arterial cells from umbilical cord and aortic endothelial cells) and in vascular smooth muscle cells (aorta). Strongly expressed in the heart, placenta, and skeletal muscle, whereas a weak expression profile was found in the lung, liver, and kidney. Expressed weakly in cell renal cell carcinoma (CC-RCC) compared to normal renal cells. Expression is down-regulated in numerous kidney tumor cells compared to non tumor kidney tissues. Isoform 2 is expressed in heart, placenta, lung, liver, skeletal muscle and pancreas and in numerous cancer cell lines. Isoform 3 and isoform 4 are weakly expressed in heart, placenta, lung, liver, skeletal muscle and pancreas. Isoform 4 is expressed in fetal tissues, such as heart, brain, thymus, lung, liver, skeletal kidney and spleen. Isoform 3 is weakly expressed in fetal tissues, such as liver and kidney.

It is found in the nucleus. It localises to the cytoplasm. The protein localises to the nucleus speckle. The protein resides in the mitochondrion. Acts as a transcriptional regulator in adaptive response to low oxygen tension. Acts as a regulator of hypoxia-inducible gene expression. Functions as an inhibitor of angiogenesis in hypoxic cells of the cornea. Plays a role in the development of the cardiorespiratory system. May also be involved in apoptosis. Functionally, attenuates the ability of transcription factor HIF1A to bind to hypoxia-responsive elements (HRE) located within the enhancer/promoter of hypoxia-inducible target genes and hence inhibits HRE-driven transcriptional activation. Also inhibits hypoxia-inducible ARNT-mediated gene expression. In terms of biological role, attenuates the ability of transcription factor HIF1A to bind to hypoxia-responsive elements (HRE) located within the enhancer/promoter of hypoxia-inducible target genes and hence inhibits HRE-driven transcriptional activation. Its function is as follows. Attenuates the ability of transcription factor HIF1A and EPAS1/HIF2A to bind to hypoxia-responsive elements (HRE) located within the enhancer/promoter of hypoxia-inducible target genes and hence inhibits HRE-driven transcriptional activation. May act as a tumor suppressor and inhibits malignant cell transformation. This Homo sapiens (Human) protein is Hypoxia-inducible factor 3-alpha.